The following is a 1384-amino-acid chain: ABC transporter C family member 2 (1384 aa).

Positions 104-388 (NKISVATKIF…LPEAIHRALS (285 aa)) constitute an ABC transmembrane type-1 1 domain. The next 5 membrane-spanning stretches (helical) occupy residues 112 to 132 (IFVAIVSILSPLCLKYFIYYI), 140 to 160 (TFKFGFLLCVLLFLSSLSLTL), 226 to 246 (IFVFPFQILALLILLCWIVGL), 247 to 267 (SGLVGFGVMVVSIPLCTFLST), and 333 to 353 (MITQVTSALVLVATFSTYALT). In terms of domain architecture, ABC transporter 1 spans 505 to 724 (IEYDGAVQPS…GIDFESIMKT (220 aa)). Residue 537 to 544 (GIVGSGKT) participates in ATP binding. Residues 729-756 (IDENDQSSTSTTDKKSSTSSSSSELKKS) form a disordered region. The segment covering 735–756 (SSTSTTDKKSSTSSSSSELKKS) has biased composition (low complexity). 5 helical membrane-spanning segments follow: residues 813–833 (LFFLTCALYFISQIIFQLSDF), 852–872 (ILYYCIFIGAFIVFLVVRYFM), 941–961 (LFMMIYITPLISIPFAILVVV), 1036–1056 (GIRLEFITALIVFFTAFSSLF), and 1061–1081 (GFSVLAVTTALGICSYLNWTI). An ABC transmembrane type-1 2 domain is found at 814–1093 (FFLTCALYFI…MTELEVKMNS (280 aa)). The region spanning 1137–1371 (VEFKNVEIKY…EGSRFKKLVK (235 aa)) is the ABC transporter 2 domain. 1171-1178 (GRTGAGKS) lines the ATP pocket.

This sequence belongs to the ABC transporter superfamily. ABCC family. Conjugate transporter (TC 3.A.1.208) subfamily.

Its subcellular location is the membrane. The protein is ABC transporter C family member 2 (abcC2) of Dictyostelium discoideum (Social amoeba).